Consider the following 156-residue polypeptide: 3-dehydroquinate dehydratase (156 aa).

Tyr31 (proton acceptor) is an active-site residue. Substrate is bound by residues Asn83, His89, and Asp96. Residue His109 is the Proton donor of the active site. Substrate is bound by residues 110-111 (LS) and Arg120.

Belongs to the type-II 3-dehydroquinase family. As to quaternary structure, homododecamer.

It carries out the reaction 3-dehydroquinate = 3-dehydroshikimate + H2O. The protein operates within metabolic intermediate biosynthesis; chorismate biosynthesis; chorismate from D-erythrose 4-phosphate and phosphoenolpyruvate: step 3/7. Its function is as follows. Catalyzes a trans-dehydration via an enolate intermediate. The chain is 3-dehydroquinate dehydratase from Chromobacterium violaceum (strain ATCC 12472 / DSM 30191 / JCM 1249 / CCUG 213 / NBRC 12614 / NCIMB 9131 / NCTC 9757 / MK).